The primary structure comprises 61 residues: Small ribosomal subunit protein uS14B (61 aa).

Residues C24, C27, C40, and C43 each coordinate Zn(2+).

The protein belongs to the universal ribosomal protein uS14 family. Zinc-binding uS14 subfamily. In terms of assembly, part of the 30S ribosomal subunit. Contacts proteins S3 and S10. Requires Zn(2+) as cofactor.

Binds 16S rRNA, required for the assembly of 30S particles and may also be responsible for determining the conformation of the 16S rRNA at the A site. The protein is Small ribosomal subunit protein uS14B of Bacillus velezensis (strain DSM 23117 / BGSC 10A6 / LMG 26770 / FZB42) (Bacillus amyloliquefaciens subsp. plantarum).